We begin with the raw amino-acid sequence, 454 residues long: Tol-Pal system protein TolB (454 aa).

A signal peptide spans 1–30 (MNDARSITRRRFMTLTGSGLAMLGGGHAFA).

It belongs to the TolB family. The Tol-Pal system is composed of five core proteins: the inner membrane proteins TolA, TolQ and TolR, the periplasmic protein TolB and the outer membrane protein Pal. They form a network linking the inner and outer membranes and the peptidoglycan layer.

The protein resides in the periplasm. Functionally, part of the Tol-Pal system, which plays a role in outer membrane invagination during cell division and is important for maintaining outer membrane integrity. This chain is Tol-Pal system protein TolB, found in Bradyrhizobium diazoefficiens (strain JCM 10833 / BCRC 13528 / IAM 13628 / NBRC 14792 / USDA 110).